We begin with the raw amino-acid sequence, 50 residues long: Large ribosomal subunit protein bL36B (50 aa).

It belongs to the bacterial ribosomal protein bL36 family.

The polypeptide is Large ribosomal subunit protein bL36B (Pseudomonas aeruginosa (strain UCBPP-PA14)).